The primary structure comprises 294 residues: Filamin-B (294 aa).

Filamin repeat units follow at residues 1–67 (GTRL…KVRV) and 71–163 (GQAG…KAKV). 2 positions are modified to phosphoserine: Ser-61 and Ser-157. A Glycyl lysine isopeptide (Lys-Gly) (interchain with G-Cter in ISG15) cross-link involves residue Lys-160. The hinge 2 stretch occupies residues 164 to 198 (TGQRLVGPGSTNETSSILVESVTRSSTETCYSAIP). The interval 164 to 294 (TGQRLVGPGS…PGSPFHVTVP (131 aa)) is self-association site, tail. 2 positions are modified to phosphoserine: Ser-173 and Ser-184. The Filamin 24 repeat unit spans residues 199 to 293 (KASSDASKVT…IPGSPFHVTV (95 aa)). Lys-210 and Lys-216 each carry N6-succinyllysine. Lys-268 carries the N6-acetyllysine modification.

The protein belongs to the filamin family. In terms of assembly, homodimer. Interacts with FLNA, FLNC, INPPL1, ITGB1A, ITGB1D, ITGB3, ITGB6, MYOT, MYOZ1, PSEN1 and PSEN2. Interacts with MICALL2. Interacts with RFLNA and RFLNB. Interacts with HTLV-I viral p13 protein. Interacts with ASB2; the interaction targets FLNB for proteasomal degradation. Post-translationally, ISGylation prevents ability to interact with the upstream activators of the JNK cascade and inhibits IFNA-induced JNK signaling. Ubiquitination by a SCF-like complex containing ASB2 leads to proteasomal degradation which promotes muscle differentiation.

It localises to the cytoplasm. The protein localises to the cell cortex. Its subcellular location is the cytoskeleton. It is found in the myofibril. The protein resides in the sarcomere. It localises to the z line. Its function is as follows. Connects cell membrane constituents to the actin cytoskeleton. May promote orthogonal branching of actin filaments and links actin filaments to membrane glycoproteins. Anchors various transmembrane proteins to the actin cytoskeleton. The chain is Filamin-B (FLNB) from Oryctolagus cuniculus (Rabbit).